The sequence spans 254 residues: Thiazole synthase (254 aa).

K96 (schiff-base intermediate with DXP) is an active-site residue. 1-deoxy-D-xylulose 5-phosphate-binding positions include G157, A183–G184, and N205–T206.

This sequence belongs to the ThiG family. In terms of assembly, homotetramer. Forms heterodimers with either ThiH or ThiS.

It is found in the cytoplasm. The catalysed reaction is [ThiS sulfur-carrier protein]-C-terminal-Gly-aminoethanethioate + 2-iminoacetate + 1-deoxy-D-xylulose 5-phosphate = [ThiS sulfur-carrier protein]-C-terminal Gly-Gly + 2-[(2R,5Z)-2-carboxy-4-methylthiazol-5(2H)-ylidene]ethyl phosphate + 2 H2O + H(+). It participates in cofactor biosynthesis; thiamine diphosphate biosynthesis. Catalyzes the rearrangement of 1-deoxy-D-xylulose 5-phosphate (DXP) to produce the thiazole phosphate moiety of thiamine. Sulfur is provided by the thiocarboxylate moiety of the carrier protein ThiS. In vitro, sulfur can be provided by H(2)S. The chain is Thiazole synthase from Clostridium perfringens (strain 13 / Type A).